Reading from the N-terminus, the 453-residue chain is UDP-N-acetylmuramate--L-alanine ligase (453 aa).

112-118 (GTHGKTT) serves as a coordination point for ATP.

The protein belongs to the MurCDEF family.

It localises to the cytoplasm. It catalyses the reaction UDP-N-acetyl-alpha-D-muramate + L-alanine + ATP = UDP-N-acetyl-alpha-D-muramoyl-L-alanine + ADP + phosphate + H(+). It participates in cell wall biogenesis; peptidoglycan biosynthesis. Functionally, cell wall formation. This is UDP-N-acetylmuramate--L-alanine ligase from Lawsonia intracellularis (strain PHE/MN1-00).